The sequence spans 479 residues: Protein C-ets-2 (479 aa).

In terms of domain architecture, PNT spans D88–S173. A DNA-binding region (ETS) is located at residues I373–V453.

This sequence belongs to the ETS family.

The protein resides in the nucleus. Its function is as follows. Probable transcription factor. This Gallus gallus (Chicken) protein is Protein C-ets-2 (ETS2).